We begin with the raw amino-acid sequence, 231 residues long: Transmembrane protein 225 (231 aa).

Residues 1 to 13 are Cytoplasmic-facing; the sequence is MMRIPNRSIQAAN. Residues 14–34 traverse the membrane as a helical segment; the sequence is IFFSSGAILLLIAGLIMENWV. The Extracellular portion of the chain corresponds to 35–71; the sequence is ELIPKVRKDKVTHSPWLGCCPPFWPEESLEAIRRMMM. A helical membrane pass occupies residues 72-92; sequence MSLNISIYLNLIIGLQFTYMI. Over 93 to 99 the chain is Cytoplasmic; that stretch reads SQNKCVH. Residues 100–120 form a helical membrane-spanning segment; that stretch reads LLIGFLSFFTGCLLFYAIIVY. Topologically, residues 121–139 are extracellular; sequence HHKLNKGQYVYFVNYKTKW. A helical membrane pass occupies residues 140-160; it reads IVFTIYLTIALFLTCGIFSFI. The Cytoplasmic segment spans residues 161–231; the sequence is QCTNRCACMK…LQSRRVTWAL (71 aa). The RVxF motif lies at 225–229; it reads RRVTW.

As to quaternary structure, interacts (via RVxF motif) with PPP1CC. As to expression, expressed in testis, specifically in spermatocytes and round spermatids.

Its subcellular location is the cytoplasmic vesicle. The protein resides in the secretory vesicle. The protein localises to the acrosome membrane. In terms of biological role, probably inhibits protein phosphatase 1 (PP1) in sperm via binding to catalytic subunit PPP1CC. The chain is Transmembrane protein 225 (Tmem225) from Rattus norvegicus (Rat).